The sequence spans 524 residues: Phosphoenolpyruvate carboxykinase (ATP) (524 aa).

Substrate is bound by residues arginine 52, tyrosine 188, and lysine 194. Residues lysine 194, histidine 213, and glycine 229–threonine 237 contribute to the ATP site. Mn(2+) is bound by residues lysine 194 and histidine 213. Residue aspartate 250 participates in Mn(2+) binding. The ATP site is built by glutamate 278, arginine 314, and threonine 439. Arginine 314 contributes to the substrate binding site.

Belongs to the phosphoenolpyruvate carboxykinase (ATP) family. Mn(2+) serves as cofactor.

It is found in the cytoplasm. The enzyme catalyses oxaloacetate + ATP = phosphoenolpyruvate + ADP + CO2. Its pathway is carbohydrate biosynthesis; gluconeogenesis. Involved in the gluconeogenesis. Catalyzes the conversion of oxaloacetate (OAA) to phosphoenolpyruvate (PEP) through direct phosphoryl transfer between the nucleoside triphosphate and OAA. In Campylobacter lari (strain RM2100 / D67 / ATCC BAA-1060), this protein is Phosphoenolpyruvate carboxykinase (ATP).